The following is a 98-amino-acid chain: uncharacterized protein (98 aa).

Helical transmembrane passes span 14-34 and 41-61; these read FLVILCMVAFLAGCTQSPVTA and MTGAQPVLIWLLISSIIASII.

The protein resides in the cell membrane. This is an uncharacterized protein from Haemophilus influenzae (strain ATCC 51907 / DSM 11121 / KW20 / Rd).